The sequence spans 72 residues: Translation initiation factor IF-1 1 (72 aa).

In terms of domain architecture, S1-like spans 1–72; it reads MSKDDVIQMA…TRARIIFRAK (72 aa).

It belongs to the IF-1 family. Component of the 30S ribosomal translation pre-initiation complex which assembles on the 30S ribosome in the order IF-2 and IF-3, IF-1 and N-formylmethionyl-tRNA(fMet); mRNA recruitment can occur at any time during PIC assembly.

It localises to the cytoplasm. One of the essential components for the initiation of protein synthesis. Stabilizes the binding of IF-2 and IF-3 on the 30S subunit to which N-formylmethionyl-tRNA(fMet) subsequently binds. Helps modulate mRNA selection, yielding the 30S pre-initiation complex (PIC). Upon addition of the 50S ribosomal subunit IF-1, IF-2 and IF-3 are released leaving the mature 70S translation initiation complex. This chain is Translation initiation factor IF-1 1, found in Polynucleobacter asymbioticus (strain DSM 18221 / CIP 109841 / QLW-P1DMWA-1) (Polynucleobacter necessarius subsp. asymbioticus).